Here is a 311-residue protein sequence, read N- to C-terminus: Ornithine carbamoyltransferase (311 aa).

Carbamoyl phosphate contacts are provided by residues glutamine 85, arginine 109, and 136–139 (HPCQ). L-ornithine-binding positions include asparagine 167, aspartate 231, and 235–236 (SM). Residues 271-272 (CL) and arginine 299 each bind carbamoyl phosphate.

Belongs to the aspartate/ornithine carbamoyltransferase superfamily. OTCase family.

It localises to the cytoplasm. The enzyme catalyses carbamoyl phosphate + L-ornithine = L-citrulline + phosphate + H(+). It functions in the pathway amino-acid biosynthesis; L-arginine biosynthesis; L-arginine from L-ornithine and carbamoyl phosphate: step 1/3. Its function is as follows. Reversibly catalyzes the transfer of the carbamoyl group from carbamoyl phosphate (CP) to the N(epsilon) atom of ornithine (ORN) to produce L-citrulline. In Geobacillus stearothermophilus (Bacillus stearothermophilus), this protein is Ornithine carbamoyltransferase (argF).